The chain runs to 309 residues: Protein FdhE (309 aa).

Belongs to the FdhE family.

The protein resides in the cytoplasm. Functionally, necessary for formate dehydrogenase activity. The polypeptide is Protein FdhE (Salmonella paratyphi A (strain ATCC 9150 / SARB42)).